A 933-amino-acid polypeptide reads, in one-letter code: Progesterone receptor (933 aa).

The segment at 1-164 is AF3; mediates transcriptional activation; it reads MTELKAKGPR…PATQGVLSPL (164 aa). The segment at 1 to 256 is disordered; the sequence is MTELKAKGPR…AAAGGGAAAV (256 aa). Positions 1-566 are modulating, Pro-Rich; sequence MTELKAKGPR…YSFESLPQKI (566 aa). At Ser20 the chain carries Phosphoserine. The short motif at 55-59 is the LXXL motif 1 element; that stretch reads LDGLL. Ser81 is modified (phosphoserine). The LXXL motif 2 signature appears at 115 to 119; it reads LDTLL. Ser130 and Ser162 each carry phosphoserine. The mediates transcriptional transrepression stretch occupies residues 165–305; it reads MSRSGCKAGD…LATTMMDFIH (141 aa). The short motif at 183-187 is the Nuclear localization signal element; that stretch reads KVLPR. Residues Ser190 and Ser213 each carry the phosphoserine modification. Residues 220–231 show a composition bias toward acidic residues; it reads EVEEEDGSESEE. Residues 232–246 are compositionally biased toward low complexity; the sequence is SAGPLLKGKPRALGG. Ser294 carries the post-translational modification Phosphoserine; by MAPK1. The disordered stretch occupies residues 331-378; it reads GGAGAASAFAPPRSSPSASSTPVAVGDFPDCAYPPDAEPKDDAYPLYS. The segment covering 335–350 has biased composition (low complexity); sequence AASAFAPPRSSPSASS. Ser345 is modified (phosphoserine; by MAPK). Lys388 is covalently cross-linked (Glycyl lysine isopeptide (Lys-Gly) (interchain with G-Cter in SUMO); alternate). Residue Lys388 forms a Glycyl lysine isopeptide (Lys-Gly) (interchain with G-Cter in ubiquitin); alternate linkage. Position 400 is a phosphoserine; by CDK2 (Ser400). Residues 415-452 are disordered; it reads PDFPLGPPPPLPPRAPPSRPGEAAVTAAPASASVSSAS. The span at 418–433 shows a compositional bias: pro residues; the sequence is PLGPPPPLPPRAPPSR. A compositionally biased stretch (low complexity) spans 434 to 452; it reads PGEAAVTAAPASASVSSAS. The segment at 456-546 is AF1; mediates transcriptional activation; it reads STLECILYKA…VYPPYLNYLR (91 aa). Lys531 participates in a covalent cross-link: Glycyl lysine isopeptide (Lys-Gly) (interchain with G-Cter in SUMO). 2 consecutive NR C4-type zinc fingers follow at residues 567-587 and 603-627; these read CLICGDEASGCHYGVLTCGSC and CAGRNDCIVDKIRRKNCPACRLRKC. Residues 567–639 constitute a DNA-binding region (nuclear receptor); sequence CLICGDEASG…AGMVLGGRKF (73 aa). Ser676 bears the Phosphoserine mark. An NR LBD domain is found at 679–913; sequence QDIQLIPPLI…EFPEMMSEVI (235 aa). The segment at 687–933 is AF2; mediates transcriptional activation; sequence LINLLMSIEP…MVKPLLFHKK (247 aa). Arg766 provides a ligand contact to progesterone.

The protein belongs to the nuclear hormone receptor family. Interacts with SMARD1 and UNC45A. Interacts with CUEDC2; the interaction promotes ubiquitination, decreases sumoylation, and represses transcriptional activity. Interacts with PIAS3; the interaction promotes sumoylation of PR in a hormone-dependent manner, inhibits DNA-binding, and alters nuclear export. Interacts with SP1; the interaction requires ligand-induced phosphorylation on Ser-345 by ERK1/2-MAPK. Interacts with PRMT2. Interacts with NCOA2 and NCOA1. Interacts with KLF9. Interacts with GTF2B. In terms of processing, phosphorylated on multiple serine sites. Several of these sites are hormone-dependent. Phosphorylation on Ser-294 is highly hormone-dependent and modulates ubiquitination and sumoylation on Lys-388. Phosphorylation on Ser-102 and Ser-345 also requires induction by hormone. Basal phosphorylation on Ser-81, Ser-162, Ser-190 and Ser-400 is increased in response to progesterone and can be phosphorylated in vitro by the CDK2-A1 complex. Increased levels of phosphorylation on Ser-400 also in the presence of EGF, heregulin, IGF, PMA and FBS. Phosphorylation at this site by CDK2 is ligand-independent, and increases nuclear translocation and transcriptional activity. Phosphorylation at Ser-162 and Ser-294, but not at Ser-190, is impaired during the G(2)/M phase of the cell cycle. Phosphorylation on Ser-345 by ERK1/2 MAPK is required for interaction with SP1. Post-translationally, sumoylation is hormone-dependent and represses transcriptional activity. Sumoylation on all three sites is enhanced by PIAS3. Desumoylated by SENP1. Sumoylation on Lys-388, the main site of sumoylation, is repressed by ubiquitination on the same site, and modulated by phosphorylation at Ser-294. Ubiquitination is hormone-dependent and represses sumoylation on the same site. Promoted by MAPK-mediated phosphorylation on Ser-294. Ubiquitinated by UBR5, leading to its degradation: UBR5 specifically recognizes and binds ligand-bound PGR when it is not associated with coactivators (NCOAs). In presence of NCOAs, the UBR5-degron is not accessible, preventing its ubiquitination and degradation. In terms of processing, palmitoylated by ZDHHC7 and ZDHHC21. Palmitoylation is required for plasma membrane targeting and for rapid intracellular signaling via ERK and AKT kinases and cAMP generation.

The protein localises to the nucleus. The protein resides in the cytoplasm. Functionally, the steroid hormones and their receptors are involved in the regulation of eukaryotic gene expression and affect cellular proliferation and differentiation in target tissues. Transcriptional activator of several progesteron-dependent promoters in a variety of cell types. Involved in activation of SRC-dependent MAPK signaling on hormone stimulation. The chain is Progesterone receptor (PGR) from Pan paniscus (Pygmy chimpanzee).